The primary structure comprises 394 residues: MGCLGNSKTEDQRNEEKAQREANKKIEKQLQKDKQVYRATHRLLLLGAGESGKSTIVKQMRILHVNGFNGEGGEEDPQAARSNSDGEKATKVQDIKNNLKEAIETIVAAMSNLVPPVELANPENQFRVDYILSVMNVPNFDFPPEFYEHAKALWEDEGVRACYERSNEYQLIDCAQYFLDKIDVVKQADYVPSDQDLLRCRVLTSGIFETKFQVDKVNFHMFDVGGQRDERRKWIQCFNDVTAIIFVVASSSYNMVIREDNQTNRLQEALNLFKSIWNNRWLRTISVILFLNKQDLLAEKVLAGKSKIEDYFPEFARYTTPEDATPEPGEDPRVTRAKYFIRDEFLRISTASGDGRHYCYPHFTCAVDTENIRRVFNDCRDIIQRMHLRQYELL.

Residues 1-23 (MGCLGNSKTEDQRNEEKAQREAN) form a disordered region. The N-palmitoyl glycine moiety is linked to residue Gly2. Cys3 carries S-palmitoyl cysteine lipidation. Over residues 8–23 (KTEDQRNEEKAQREAN) the composition is skewed to basic and acidic residues. The region spanning 39 to 394 (ATHRLLLLGA…RMHLRQYELL (356 aa)) is the G-alpha domain. The interval 42–55 (RLLLLGAGESGKST) is G1 motif. Residue 47–55 (GAGESGKST) participates in GTP binding. Ser54 contributes to the Mg(2+) binding site. A disordered region spans residues 68–90 (FNGEGGEEDPQAARSNSDGEKAT). A G2 motif region spans residues 196–204 (DLLRCRVLT). Residues 197–204 (LLRCRVLT), 223–227 (DVGGQ), 292–295 (NKQD), and Ala366 contribute to the GTP site. Thr204 is a Mg(2+) binding site. Positions 219–228 (FHMFDVGGQR) are G3 motif. Residues 288 to 295 (ILFLNKQD) form a G4 motif region. A G5 motif region spans residues 364–369 (TCAVDT).

Belongs to the G-alpha family. G(s) subfamily. As to quaternary structure, heterotrimeric G proteins are composed of 3 units; alpha, beta and gamma. The alpha chain contains the guanine nucleotide binding site. Interacts with CRY1; the interaction may block GPCR-mediated regulation of cAMP concentrations. Interacts with ADCY6 and stimulates its adenylyl cyclase activity. Interacts with ADCY2 and ADCY5. Stimulates the ADCY5 adenylyl cyclase activity. Interaction with SASH1.

It is found in the cell membrane. In terms of biological role, guanine nucleotide-binding proteins (G proteins) function as transducers in numerous signaling pathways controlled by G protein-coupled receptors (GPCRs). Signaling involves the activation of adenylyl cyclases, resulting in increased levels of the signaling molecule cAMP. GNAS functions downstream of several GPCRs, including beta-adrenergic receptors. Stimulates the Ras signaling pathway via RAPGEF2. This chain is Guanine nucleotide-binding protein G(s) subunit alpha (GNAS), found in Cricetulus griseus (Chinese hamster).